A 279-amino-acid chain; its full sequence is Large ribosomal subunit protein uL2 (279 aa).

Disordered regions lie at residues 1 to 59 (MGIR…GGHK) and 224 to 279 (VAMN…KNKR). Basic residues predominate over residues 50-59 (TTRHKGGGHK). The span at 253–268 (REGRTRRPNKESDKLI) shows a compositional bias: basic and acidic residues. Over residues 269–279 (VRRRRTGKNKR) the composition is skewed to basic residues.

It belongs to the universal ribosomal protein uL2 family. In terms of assembly, part of the 50S ribosomal subunit. Forms a bridge to the 30S subunit in the 70S ribosome.

One of the primary rRNA binding proteins. Required for association of the 30S and 50S subunits to form the 70S ribosome, for tRNA binding and peptide bond formation. It has been suggested to have peptidyltransferase activity; this is somewhat controversial. Makes several contacts with the 16S rRNA in the 70S ribosome. The polypeptide is Large ribosomal subunit protein uL2 (Pseudarthrobacter chlorophenolicus (strain ATCC 700700 / DSM 12829 / CIP 107037 / JCM 12360 / KCTC 9906 / NCIMB 13794 / A6) (Arthrobacter chlorophenolicus)).